The chain runs to 172 residues: Adenine phosphoribosyltransferase (172 aa).

Belongs to the purine/pyrimidine phosphoribosyltransferase family. As to quaternary structure, homodimer.

It localises to the cytoplasm. It catalyses the reaction AMP + diphosphate = 5-phospho-alpha-D-ribose 1-diphosphate + adenine. It participates in purine metabolism; AMP biosynthesis via salvage pathway; AMP from adenine: step 1/1. Functionally, catalyzes a salvage reaction resulting in the formation of AMP, that is energically less costly than de novo synthesis. The polypeptide is Adenine phosphoribosyltransferase (Prochlorococcus marinus (strain MIT 9211)).